We begin with the raw amino-acid sequence, 324 residues long: Arginase (324 aa).

Mn(2+)-binding residues include histidine 115, aspartate 142, histidine 144, and aspartate 146. Residues 144 to 148 (HTDLH), 155 to 157 (SGN), and aspartate 196 each bind substrate. 2 residues coordinate Mn(2+): aspartate 244 and aspartate 246. Threonine 258 and glutamate 289 together coordinate substrate.

It belongs to the arginase family. In terms of assembly, homohexamer. Mn(2+) is required as a cofactor.

The catalysed reaction is L-arginine + H2O = urea + L-ornithine. It participates in nitrogen metabolism; urea cycle; L-ornithine and urea from L-arginine: step 1/1. The chain is Arginase (arcA) from Agrobacterium fabrum (strain C58 / ATCC 33970) (Agrobacterium tumefaciens (strain C58)).